A 482-amino-acid chain; its full sequence is UDP-N-acetylmuramoyl-L-alanyl-D-glutamate--2,6-diaminopimelate ligase 1 (482 aa).

Residue Ser-30 coordinates UDP-N-acetyl-alpha-D-muramoyl-L-alanyl-D-glutamate. ATP is bound at residue 110 to 116 (GTNGKTT). Residues 152-153 (TT), Ser-179, and Arg-187 contribute to the UDP-N-acetyl-alpha-D-muramoyl-L-alanyl-D-glutamate site. The residue at position 219 (Lys-219) is an N6-carboxylysine. Residues Arg-378, 402-405 (DNPR), Gly-452, and Glu-456 each bind meso-2,6-diaminopimelate. Positions 402–405 (DNPR) match the Meso-diaminopimelate recognition motif motif.

This sequence belongs to the MurCDEF family. MurE subfamily. Requires Mg(2+) as cofactor. In terms of processing, carboxylation is probably crucial for Mg(2+) binding and, consequently, for the gamma-phosphate positioning of ATP.

The protein resides in the cytoplasm. It catalyses the reaction UDP-N-acetyl-alpha-D-muramoyl-L-alanyl-D-glutamate + meso-2,6-diaminopimelate + ATP = UDP-N-acetyl-alpha-D-muramoyl-L-alanyl-gamma-D-glutamyl-meso-2,6-diaminopimelate + ADP + phosphate + H(+). Its pathway is cell wall biogenesis; peptidoglycan biosynthesis. Functionally, catalyzes the addition of meso-diaminopimelic acid to the nucleotide precursor UDP-N-acetylmuramoyl-L-alanyl-D-glutamate (UMAG) in the biosynthesis of bacterial cell-wall peptidoglycan. The polypeptide is UDP-N-acetylmuramoyl-L-alanyl-D-glutamate--2,6-diaminopimelate ligase 1 (Clostridium acetobutylicum (strain ATCC 824 / DSM 792 / JCM 1419 / IAM 19013 / LMG 5710 / NBRC 13948 / NRRL B-527 / VKM B-1787 / 2291 / W)).